The primary structure comprises 268 residues: Tryptophan synthase alpha chain (268 aa).

Residues Glu49 and Asp60 each act as proton acceptor in the active site.

This sequence belongs to the TrpA family. In terms of assembly, tetramer of two alpha and two beta chains.

The catalysed reaction is (1S,2R)-1-C-(indol-3-yl)glycerol 3-phosphate + L-serine = D-glyceraldehyde 3-phosphate + L-tryptophan + H2O. It participates in amino-acid biosynthesis; L-tryptophan biosynthesis; L-tryptophan from chorismate: step 5/5. In terms of biological role, the alpha subunit is responsible for the aldol cleavage of indoleglycerol phosphate to indole and glyceraldehyde 3-phosphate. This is Tryptophan synthase alpha chain from Photorhabdus laumondii subsp. laumondii (strain DSM 15139 / CIP 105565 / TT01) (Photorhabdus luminescens subsp. laumondii).